A 471-amino-acid polypeptide reads, in one-letter code: UDP-N-acetylmuramate--L-alanine ligase (471 aa).

114 to 120 (GTHGKTT) lines the ATP pocket.

This sequence belongs to the MurCDEF family.

Its subcellular location is the cytoplasm. The catalysed reaction is UDP-N-acetyl-alpha-D-muramate + L-alanine + ATP = UDP-N-acetyl-alpha-D-muramoyl-L-alanine + ADP + phosphate + H(+). It participates in cell wall biogenesis; peptidoglycan biosynthesis. Its function is as follows. Cell wall formation. This is UDP-N-acetylmuramate--L-alanine ligase from Methylobacterium sp. (strain 4-46).